The sequence spans 295 residues: Non-selective voltage-gated ion channel VDAC2 (295 aa).

ATP contacts are provided by Lys-24 and Lys-32. Lys-32 bears the N6-acetyllysine; alternate mark. Lys-32 carries the N6-succinyllysine; alternate modification. Residue Lys-32 forms a Glycyl lysine isopeptide (Lys-Gly) (interchain with G-Cter in ubiquitin); alternate linkage. The next 2 beta stranded transmembrane spans lie at 38 to 47 (LVKLDVKTKS) and 51 to 59 (VEFSTSGSS). Lys-65 participates in a covalent cross-link: Glycyl lysine isopeptide (Lys-Gly) (interchain with G-Cter in ubiquitin). A beta stranded membrane pass occupies residues 66-76 (VSGTLETKYKW). Tyr-79 carries the phosphotyrosine modification. 3 consecutive transmembrane segments (beta stranded) span residues 81–88 (LTFTEKWN), 92–101 (TLGTEIAIED), and 107–116 (LKLTFDTTFS). Thr-119 is subject to Phosphothreonine. Lys-121 is subject to N6-acetyllysine; alternate. A Glycyl lysine isopeptide (Lys-Gly) (interchain with G-Cter in ubiquitin); alternate cross-link involves residue Lys-121. Residue Lys-122 forms a Glycyl lysine isopeptide (Lys-Gly) (interchain with G-Cter in ubiquitin) linkage. Transmembrane regions (beta stranded) follow at residues 123–132 (SGKIKSAYKR), 135–142 (INLGCDVD), 149–157 (AIHGSAVFG), and 162–170 (LAGYQMTFD). Lys-173 is covalently cross-linked (Glycyl lysine isopeptide (Lys-Gly) (interchain with G-Cter in ubiquitin)). Transmembrane regions (beta stranded) follow at residues 175 to 187 (KLTR…GYRT), 190 to 197 (FQLHTNVN), 201 to 210 (EFGGSIYQKV), 214 to 223 (FDTSVNLAWT), 230 to 239 (RFGIAAKYQL), and 243 to 250 (ASISAKVN). Residue Tyr-237 is modified to Phosphotyrosine. Ser-252 is modified (phosphoserine). NAD(+)-binding positions include 254-256 (LIG) and 272-276 (SALVD). 2 consecutive transmembrane segments (beta stranded) span residues 254-263 (LIGVGYTQTL) and 266-275 (GVKLTLSALV). Residue Lys-278 is modified to N6-acetyllysine; alternate. A Glycyl lysine isopeptide (Lys-Gly) (interchain with G-Cter in ubiquitin); alternate cross-link involves residue Lys-278. Residues 285 to 294 (HKLGLALELE) form a beta stranded membrane-spanning segment.

It belongs to the eukaryotic mitochondrial porin family. As to quaternary structure, monomer, homodimer and higher order oligomers; formation of higher order structures is necessary for scramblase activity. Interacts with ARMC12 in a TBC1D21-dependent manner. Interacts with KLC3. Interacts with SPATA33. Interacts with PPP3CC in a SPATA33-dependent manner. In terms of processing, ubiquitinated by PRKN during mitophagy, leading to its degradation and enhancement of mitophagy. Deubiquitinated by USP30. In terms of tissue distribution, highly expressed in heart, kidney, brain and ascitic tumor with very low levels in liver. Expressed in the head region of epididymal sperm.

The protein resides in the mitochondrion outer membrane. The protein localises to the membrane. It carries out the reaction chloride(in) = chloride(out). The catalysed reaction is K(+)(in) = K(+)(out). The enzyme catalyses a 1,2-diacyl-sn-glycero-3-phospho-L-serine(in) = a 1,2-diacyl-sn-glycero-3-phospho-L-serine(out). It catalyses the reaction a 1,2-diacyl-sn-glycero-3-phosphocholine(in) = a 1,2-diacyl-sn-glycero-3-phosphocholine(out). It carries out the reaction a 1,2-diacyl-sn-glycero-3-phospho-(1D-myo-inositol)(in) = a 1,2-diacyl-sn-glycero-3-phospho-(1D-myo-inositol)(out). Non-selective voltage-gated ion channel that mediates the transport of anions and cations through the mitochondrion outer membrane and plasma membrane. The channel adopts an open conformation at zero mV and a closed conformation at both positive and negative potentials. There are two populations of channels; the main that functions in a lower open-state conductance with lower ion selectivity, that switch, in a voltage-dependent manner, from the open to a low-conducting 'closed' state and the other that has a normal ion selectivity in the typical high conductance, 'open' state. Binds various lipids, including the sphingolipid ceramide, the phospholipid phosphatidylcholine, and the sterols cholesterol and oxysterol. Binding of ceramide promotes the mitochondrial outer membrane permeabilization (MOMP) apoptotic pathway. Its function is as follows. Catalyzes the scrambling of phospholipids across the outer mitochondrial membrane; the mechanism is unrelated to channel activity and is capable of translocating both anionic and zwitterionic phospholipids. The chain is Non-selective voltage-gated ion channel VDAC2 from Rattus norvegicus (Rat).